The following is a 585-amino-acid chain: DNA ligase (585 aa).

Glu278 is an ATP binding site. Residue Lys280 is the N6-AMP-lysine intermediate of the active site. The ATP site is built by Arg285, Arg301, Glu330, Phe370, Arg444, and Lys450.

This sequence belongs to the ATP-dependent DNA ligase family. It depends on Mg(2+) as a cofactor.

The catalysed reaction is ATP + (deoxyribonucleotide)n-3'-hydroxyl + 5'-phospho-(deoxyribonucleotide)m = (deoxyribonucleotide)n+m + AMP + diphosphate.. DNA ligase that seals nicks in double-stranded DNA during DNA replication, DNA recombination and DNA repair. The sequence is that of DNA ligase from Haloferax volcanii (strain ATCC 29605 / DSM 3757 / JCM 8879 / NBRC 14742 / NCIMB 2012 / VKM B-1768 / DS2) (Halobacterium volcanii).